Here is a 424-residue protein sequence, read N- to C-terminus: NADH-quinone oxidoreductase subunit H (424 aa).

Transmembrane regions (helical) follow at residues 11–31 (LVVAKAIAIFVFLMLTVLVAI), 79–99 (FVYFVAPIISVIPAFTAFAFI), 119–139 (LPVAVLFILGLSAIGVYGIVL), 160–180 (VISYEVAMGLSFAAVFLYAGS), 193–213 (VWYIFLLLPSFVIYLISMVGE), 255–275 (VSALAATLFLGGWHAPWPLNL), 283–303 (WWPVLWFTAKVWGFLFMYFWL), 317–337 (ALGWKLLIPVSLVWVLIAAVI), and 347–367 (YWTPALVVSSIVVAAILVMSL). Residues 376-424 (AVTKARRRGKQPAAGPDEQGALEPLFPTPPLPMKPLAQPVGASKENARG) are disordered.

This sequence belongs to the complex I subunit 1 family. NDH-1 is composed of 14 different subunits. Subunits NuoA, H, J, K, L, M, N constitute the membrane sector of the complex.

Its subcellular location is the cell membrane. It catalyses the reaction a quinone + NADH + 5 H(+)(in) = a quinol + NAD(+) + 4 H(+)(out). In terms of biological role, NDH-1 shuttles electrons from NADH, via FMN and iron-sulfur (Fe-S) centers, to quinones in the respiratory chain. The immediate electron acceptor for the enzyme in this species is believed to be menaquinone. Couples the redox reaction to proton translocation (for every two electrons transferred, four hydrogen ions are translocated across the cytoplasmic membrane), and thus conserves the redox energy in a proton gradient. This subunit may bind ubiquinone. The protein is NADH-quinone oxidoreductase subunit H of Mycobacterium ulcerans (strain Agy99).